Here is a 335-residue protein sequence, read N- to C-terminus: Beta-ketoacyl-[acyl-carrier-protein] synthase III (335 aa).

Active-site residues include Cys-119 and His-261. The ACP-binding stretch occupies residues 262-266 (QANQR). Asn-291 is a catalytic residue.

Belongs to the thiolase-like superfamily. FabH family. Homodimer.

It is found in the cytoplasm. The catalysed reaction is malonyl-[ACP] + acetyl-CoA + H(+) = 3-oxobutanoyl-[ACP] + CO2 + CoA. It functions in the pathway lipid metabolism; fatty acid biosynthesis. Catalyzes the condensation reaction of fatty acid synthesis by the addition to an acyl acceptor of two carbons from malonyl-ACP. Catalyzes the first condensation reaction which initiates fatty acid synthesis and may therefore play a role in governing the total rate of fatty acid production. Possesses both acetoacetyl-ACP synthase and acetyl transacylase activities. Its substrate specificity determines the biosynthesis of branched-chain and/or straight-chain of fatty acids. The sequence is that of Beta-ketoacyl-[acyl-carrier-protein] synthase III from Prochlorococcus marinus (strain MIT 9215).